A 251-amino-acid polypeptide reads, in one-letter code: Ribosomal RNA small subunit methyltransferase G (251 aa).

S-adenosyl-L-methionine-binding positions include G74, F79, 125-126 (AE), and R144. The interval 224 to 251 (RPAGLPTQHPLGAIEGAPRVESEEPEEP) is disordered.

Belongs to the methyltransferase superfamily. RNA methyltransferase RsmG family.

Its subcellular location is the cytoplasm. Its function is as follows. Specifically methylates the N7 position of a guanine in 16S rRNA. This chain is Ribosomal RNA small subunit methyltransferase G, found in Gloeobacter violaceus (strain ATCC 29082 / PCC 7421).